A 139-amino-acid polypeptide reads, in one-letter code: ATP synthase epsilon chain (139 aa).

It belongs to the ATPase epsilon chain family. F-type ATPases have 2 components, CF(1) - the catalytic core - and CF(0) - the membrane proton channel. CF(1) has five subunits: alpha(3), beta(3), gamma(1), delta(1), epsilon(1). CF(0) has three main subunits: a, b and c.

The protein localises to the cell membrane. Produces ATP from ADP in the presence of a proton gradient across the membrane. This is ATP synthase epsilon chain from Streptococcus pneumoniae serotype 2 (strain D39 / NCTC 7466).